We begin with the raw amino-acid sequence, 142 residues long: ATP synthase epsilon chain (142 aa).

Belongs to the ATPase epsilon chain family. As to quaternary structure, F-type ATPases have 2 components, CF(1) - the catalytic core - and CF(0) - the membrane proton channel. CF(1) has five subunits: alpha(3), beta(3), gamma(1), delta(1), epsilon(1). CF(0) has three main subunits: a, b and c.

The protein resides in the cell inner membrane. Its function is as follows. Produces ATP from ADP in the presence of a proton gradient across the membrane. The protein is ATP synthase epsilon chain of Shewanella halifaxensis (strain HAW-EB4).